Consider the following 597-residue polypeptide: Elongation factor 4 (597 aa).

Residues 2–184 (DHIRNFSIIA…ALVAKVPPPK (183 aa)) enclose the tr-type G domain. GTP-binding positions include 14-19 (DHGKST) and 131-134 (NKID).

The protein belongs to the TRAFAC class translation factor GTPase superfamily. Classic translation factor GTPase family. LepA subfamily.

It is found in the cell inner membrane. The catalysed reaction is GTP + H2O = GDP + phosphate + H(+). Required for accurate and efficient protein synthesis under certain stress conditions. May act as a fidelity factor of the translation reaction, by catalyzing a one-codon backward translocation of tRNAs on improperly translocated ribosomes. Back-translocation proceeds from a post-translocation (POST) complex to a pre-translocation (PRE) complex, thus giving elongation factor G a second chance to translocate the tRNAs correctly. Binds to ribosomes in a GTP-dependent manner. The protein is Elongation factor 4 of Paraburkholderia xenovorans (strain LB400).